The following is a 161-amino-acid chain: Short form salivary protein D7S (161 aa).

An N-terminal signal peptide occupies residues 1-18; it reads MKFPSILLAILLFKPITA. 3 disulfide bridges follow: Cys-33–Cys-67, Cys-47–Cys-155, and Cys-109–Cys-125.

The protein belongs to the PBP/GOBP family.

The protein localises to the secreted. Functionally, in contrast to the related D7 salivary proteins, does not bind serotonin. The polypeptide is Short form salivary protein D7S (Culex quinquefasciatus (Southern house mosquito)).